A 53-amino-acid polypeptide reads, in one-letter code: Antitoxin RelB3 (53 aa).

Forms heterodimers with RelE and possibly a heterotetramer RelE3-RelB3(2)-RelE3 from 2 heterodimers. The heterotetramer is probably not very stable in solution.

Antitoxin component of a type II toxin-antitoxin (TA) system. Probably neutralizes the toxic activity of cognate toxin RelE. The polypeptide is Antitoxin RelB3 (relB3) (Methanocaldococcus jannaschii (strain ATCC 43067 / DSM 2661 / JAL-1 / JCM 10045 / NBRC 100440) (Methanococcus jannaschii)).